The chain runs to 122 residues: Large ribosomal subunit protein uL14 (122 aa).

The protein belongs to the universal ribosomal protein uL14 family. In terms of assembly, part of the 50S ribosomal subunit. Forms a cluster with proteins L3 and L19. In the 70S ribosome, L14 and L19 interact and together make contacts with the 16S rRNA in bridges B5 and B8.

Functionally, binds to 23S rRNA. Forms part of two intersubunit bridges in the 70S ribosome. The polypeptide is Large ribosomal subunit protein uL14 (Desulfitobacterium hafniense (strain DSM 10664 / DCB-2)).